We begin with the raw amino-acid sequence, 550 residues long: Envelope glycoprotein E (550 aa).

A signal peptide spans Met-1–Ala-20. Residues Gly-21 to Arg-419 lie on the Virion surface side of the membrane. Residues Cys-63–Cys-88 are interaction with gI. N-linked (GlcNAc...) asparagine; by host glycosylation is present at Asn-124. The tract at residues Gln-162–Pro-214 is disordered. Pro residues predominate over residues Ala-164 to Pro-173. The segment covering Asp-175–Ser-188 has biased composition (acidic residues). A Sulfotyrosine; by host modification is found at Tyr-176. The segment covering Arg-199 to Ser-209 has biased composition (pro residues). The fc-binding stretch occupies residues Ser-235 to Gln-380. Residue Asn-243 is glycosylated (N-linked (GlcNAc...) asparagine; by host). Cystine bridges form between Cys-271–Cys-297, Cys-280–Cys-289, and Cys-314–Cys-323. Positions Gly-394–Pro-413 are disordered. The span at Pro-403 to Pro-413 shows a compositional bias: low complexity. Residues Leu-420–Cys-440 form a helical membrane-spanning segment. At Met-441–Trp-550 the chain is on the intravirion side. 2 consecutive short sequence motifs (internalization motif) follow at residues Tyr-463–Val-466 and Tyr-472–Trp-475. The tract at residues Glu-470–Pro-495 is interaction with VP22 and UL11. Residues Ser-476 and Ser-477 each carry the phosphoserine; by host CK2 modification. The tract at residues Ser-476–Asp-484 is acidic. Residues Ser-476 to Trp-550 form a disordered region. Residue Ser-503 is modified to Phosphoserine. Residues Ser-541–Trp-550 show a composition bias toward polar residues.

The protein belongs to the alphaherpesvirinae glycoprotein E family. In terms of assembly, interacts with gI; this interaction enhances the Fc receptor function of gE. The heterodimer gE/gI interacts with the Fc part of host IgG. Interacts (via C-terminus) with VP22 tegument protein; this interaction is necessary for the recruitment of VP22 to the Golgi and its packaging into virions. Interacts (via C-terminus) with UL11 tegument protein. Post-translationally, phosphorylated on serines within the acidic cluster. Phosphorylation determines whether endocytosed viral gE traffics to the trans-Golgi network or recycles to the cell membrane. In terms of processing, N-glycosylated, and sulfated.

Its subcellular location is the virion membrane. The protein localises to the host cell membrane. It localises to the host cell junction. It is found in the host Golgi apparatus membrane. The protein resides in the host endosome membrane. In terms of biological role, in epithelial cells, the heterodimer gE/gI is required for the cell-to-cell spread of the virus, by sorting nascent virions to cell junctions. Once the virus reaches the cell junctions, virus particles can spread to adjacent cells extremely rapidly through interactions with cellular receptors that accumulate at these junctions. Implicated in basolateral spread in polarized cells. In neuronal cells, gE/gI is essential for the anterograde spread of the infection throughout the host nervous system. Together with US9, the heterodimer gE/gI is involved in the sorting and transport of viral structural components toward axon tips. Its function is as follows. The heterodimer gE/gI serves as a receptor for the Fc part of host IgG. Dissociation of gE/gI from IgG occurs at acidic pH. May thus be involved in anti-HSV antibodies bipolar bridging, followed by intracellular endocytosis and degradation, thereby interfering with host IgG-mediated immune responses. This chain is Envelope glycoprotein E (gE), found in Human herpesvirus 1 (strain 17) (HHV-1).